Consider the following 186-residue polypeptide: Trafficking protein particle complex subunit 3 (186 aa).

Belongs to the TRAPP small subunits family. BET3 subfamily. Homodimer. Part of the multisubunit TRAPP (transport protein particle) complex.

The protein localises to the golgi apparatus. It localises to the cis-Golgi network. Its subcellular location is the endoplasmic reticulum. May play a role in vesicular transport from endoplasmic reticulum to Golgi. The protein is Trafficking protein particle complex subunit 3 (trappc3) of Dictyostelium discoideum (Social amoeba).